The chain runs to 227 residues: 2,3-bisphosphoglycerate-dependent phosphoglycerate mutase (227 aa).

Residues Arg8–Asn15, Thr21–Gly22, Arg58, Glu110–Tyr113, Lys121, Arg137–Arg138, and Gly181–Asn182 contribute to the substrate site. Residue His9 is the Tele-phosphohistidine intermediate of the active site. The active-site Proton donor/acceptor is Glu110.

This sequence belongs to the phosphoglycerate mutase family. BPG-dependent PGAM subfamily. As to quaternary structure, homodimer.

It catalyses the reaction (2R)-2-phosphoglycerate = (2R)-3-phosphoglycerate. Its pathway is carbohydrate degradation; glycolysis; pyruvate from D-glyceraldehyde 3-phosphate: step 3/5. Catalyzes the interconversion of 2-phosphoglycerate and 3-phosphoglycerate. The polypeptide is 2,3-bisphosphoglycerate-dependent phosphoglycerate mutase (Pseudoalteromonas atlantica (strain T6c / ATCC BAA-1087)).